Reading from the N-terminus, the 450-residue chain is MTIEGVYPDPALFGHDPWWLVLGKALAIFVFLVLTPLLTILAERKVMAWMQMRVGPNRVGPRGMLQSLADGIKLALKEGIVPKGVDKPIYILAPVIAAVPAFMAFAVIPFGPAVSIFGHYTPLQLTDLPVAVLYVLAATSIGVYGIVLAGWASGSTYPLLGGLRSTAQVISYEIAMALSFAAVFLDAGTMSTSGIVAAQEHTWYVFLLLPSFLIYVTSMVGETNRAPFDLPEAEGELVGGFHTEYSSLSFAMFMLAEYVNMVTVSALATTLFLGGWHAPFPLSLWDGANSGWWPVLWFTLKVWGFLFVFVWLRATLPRLRYDQFMGLGWKILIPISLVWVMIVATVRAFRNEGYDARSIALVVAGLVVALVVVVLLWKRLRPGRVPAPEKPVEPRGRAELSPETLEPFDPMAGGYPVPPMPGQTLPAFRRTPVSVTGAHSTGPTQENSDD.

Transmembrane regions (helical) follow at residues 18 to 38 (WWLV…TPLL), 91 to 111 (ILAP…IPFG), 128 to 148 (LPVA…GIVL), 169 to 189 (VISY…DAGT), 201 to 221 (HTWY…SMVG), 262 to 282 (VTVS…PFPL), 292 to 312 (WWPV…FVWL), 324 to 344 (FMGL…MIVA), and 358 to 378 (SIAL…LLWK). The segment at 387–450 (APEKPVEPRG…TGPTQENSDD (64 aa)) is disordered. Positions 390 to 400 (KPVEPRGRAEL) are enriched in basic and acidic residues. Positions 433 to 450 (VSVTGAHSTGPTQENSDD) are enriched in polar residues.

Belongs to the complex I subunit 1 family. NDH-1 is composed of 14 different subunits. Subunits NuoA, H, J, K, L, M, N constitute the membrane sector of the complex.

The protein resides in the cell membrane. It carries out the reaction a quinone + NADH + 5 H(+)(in) = a quinol + NAD(+) + 4 H(+)(out). NDH-1 shuttles electrons from NADH, via FMN and iron-sulfur (Fe-S) centers, to quinones in the respiratory chain. The immediate electron acceptor for the enzyme in this species is believed to be ubiquinone. Couples the redox reaction to proton translocation (for every two electrons transferred, four hydrogen ions are translocated across the cytoplasmic membrane), and thus conserves the redox energy in a proton gradient. This subunit may bind ubiquinone. This is NADH-quinone oxidoreductase subunit H from Rhodococcus jostii (strain RHA1).